Consider the following 71-residue polypeptide: Translational regulator CsrA (71 aa).

The protein belongs to the CsrA/RsmA family. Homodimer; the beta-strands of each monomer intercalate to form a hydrophobic core, while the alpha-helices form wings that extend away from the core.

It is found in the cytoplasm. In terms of biological role, a key translational regulator that binds mRNA to regulate translation initiation and/or mRNA stability. Mediates global changes in gene expression, shifting from rapid growth to stress survival by linking envelope stress, the stringent response and the catabolite repression systems. Usually binds in the 5'-UTR; binding at or near the Shine-Dalgarno sequence prevents ribosome-binding, repressing translation, binding elsewhere in the 5'-UTR can activate translation and/or stabilize the mRNA. Its function is antagonized by small RNA(s). The polypeptide is Translational regulator CsrA (Pseudoalteromonas atlantica (strain T6c / ATCC BAA-1087)).